The sequence spans 71 residues: Small ribosomal subunit protein bS21 (71 aa).

The protein belongs to the bacterial ribosomal protein bS21 family.

The polypeptide is Small ribosomal subunit protein bS21 (Photobacterium profundum (strain SS9)).